Here is a 182-residue protein sequence, read N- to C-terminus: Ribulose bisphosphate carboxylase small subunit, chloroplastic 1 (182 aa).

A chloroplast-targeting transit peptide spans 1–42 (MASIMMNKSVVLSKECAKPLATPKVTLNKRGFATTIATKNRE).

The protein belongs to the RuBisCO small chain family. Heterohexadecamer of 8 large and 8 small subunits.

It is found in the plastid. The protein localises to the chloroplast. RuBisCO catalyzes two reactions: the carboxylation of D-ribulose 1,5-bisphosphate, the primary event in carbon dioxide fixation, as well as the oxidative fragmentation of the pentose substrate. Both reactions occur simultaneously and in competition at the same active site. Although the small subunit is not catalytic it is essential for maximal activity. This Acetabularia acetabulum (Mermaid's wine glass) protein is Ribulose bisphosphate carboxylase small subunit, chloroplastic 1.